A 280-amino-acid chain; its full sequence is MSALNLTVRVHPVVLFQVVDAFERRNADSHRVIGTLLGSVDKGVVEVTNCFCVPHKEHDDQVEAELSYALDMYDLNRKVNSNESVVGWWATGNDVTNHSSVIHEYYARECNNPVHLTVDTSLQGGRMGLRAYVCIQLGVPGGKSGCMFTPIPVELTSYEPETFGLKLLQKTVGVSPAHRPKTVPPMLDLAQISEASTKLQSLLDLILKYVDDVIAHKVTPDNAVGRQLLDLIHSVPHMTHEQFTQMFNANVRNLLLVITLSQLIKTQLQLNEKLTFLPTA.

The region spanning V8–G138 is the MPN domain.

The protein belongs to the eIF-3 subunit F family. As to quaternary structure, component of the eukaryotic translation initiation factor 3 (eIF-3) complex. The eIF-3 complex interacts with pix.

It localises to the cytoplasm. Its function is as follows. Component of the eukaryotic translation initiation factor 3 (eIF-3) complex, which is involved in protein synthesis of a specialized repertoire of mRNAs and, together with other initiation factors, stimulates binding of mRNA and methionyl-tRNAi to the 40S ribosome. The eIF-3 complex specifically targets and initiates translation of a subset of mRNAs involved in cell proliferation. This Drosophila erecta (Fruit fly) protein is Eukaryotic translation initiation factor 3 subunit F-1.